A 134-amino-acid chain; its full sequence is Protein Turandot E (134 aa).

An N-terminal signal peptide occupies residues 1-38; sequence MSYTRTIHSSASILKMNSALQISCLLVVLGCLLGSGHC.

This sequence belongs to the Turandot family.

It localises to the secreted. In terms of biological role, a humoral factor that may play a role in stress tolerance. In Drosophila sechellia (Fruit fly), this protein is Protein Turandot E.